The primary structure comprises 546 residues: Chaperonin GroEL (546 aa).

ATP is bound by residues 30–33 (TLGP), Lys-51, 87–91 (DGTTT), Gly-415, and Asp-497. The tract at residues 527-546 (PKKDSPAPAMPGGGMGGMDF) is disordered. Gly residues predominate over residues 537–546 (PGGGMGGMDF).

It belongs to the chaperonin (HSP60) family. As to quaternary structure, forms a cylinder of 14 subunits composed of two heptameric rings stacked back-to-back. Interacts with the co-chaperonin GroES.

The protein resides in the cytoplasm. The enzyme catalyses ATP + H2O + a folded polypeptide = ADP + phosphate + an unfolded polypeptide.. Its function is as follows. Together with its co-chaperonin GroES, plays an essential role in assisting protein folding. The GroEL-GroES system forms a nano-cage that allows encapsulation of the non-native substrate proteins and provides a physical environment optimized to promote and accelerate protein folding. This is Chaperonin GroEL from Methylobacterium radiotolerans (strain ATCC 27329 / DSM 1819 / JCM 2831 / NBRC 15690 / NCIMB 10815 / 0-1).